The sequence spans 160 residues: DNA polymerase delta subunit 4 (160 aa).

Residues 1–48 (MKKRTTQAKKSGQNTNIRDVFPHVVRSNSSQSHIGKKVSSEQSPTPDV) form a disordered region. Polar residues predominate over residues 8–17 (AKKSGQNTNI).

The protein belongs to the DNA polymerase delta subunit 4 family. Heterotetramer that consist of the pol3, cdc1, cdc27 and cdm1 subunits. Interacts with cdc1 and pol3.

The protein resides in the nucleus. Its function is as follows. Appears to have a role in the stabilization of the DNA polymerase delta complex. The chain is DNA polymerase delta subunit 4 (cdm1) from Schizosaccharomyces pombe (strain 972 / ATCC 24843) (Fission yeast).